Here is a 504-residue protein sequence, read N- to C-terminus: Signal transduction histidine-protein kinase/phosphatase MprB (504 aa).

At 1-26 the chain is on the cytoplasmic side; that stretch reads MWWFRRRDRAPLRATSSLSLRWRVML. Residues 27–47 form a helical membrane-spanning segment; the sequence is LAMSMVAMVVVLMSFAVYAVI. Topologically, residues 48–163 are extracellular; the sequence is SAALYSDIDN…PTEAVMNKLR (116 aa). The chain crosses the membrane as a helical span at residues 164–184; the sequence is WVLLIVGGIGVAVAAVAGGMV. At 185–504 the chain is on the cytoplasmic side; it reads TRAGLRPVGR…SVESQSTRAT (320 aa). The region spanning 186 to 238 is the HAMP domain; it reads RAGLRPVGRLTEAAERVARTDDLRPIPVFGSDELARLTEAFNLMLRALAESRE. The Histidine kinase domain occupies 246–466; sequence DAGHELRTPL…SIYVLLPGRR (221 aa). A Phosphohistidine; by autocatalysis modification is found at histidine 249. The segment at 471-504 is disordered; it reads QLPGATAGARSTDIENSRGSANVISVESQSTRAT. The segment covering 487-504 has biased composition (polar residues); sequence SRGSANVISVESQSTRAT.

The cofactor is Mg(2+). Mn(2+) serves as cofactor. Autophosphorylated.

It localises to the cell membrane. It carries out the reaction ATP + protein L-histidine = ADP + protein N-phospho-L-histidine.. In terms of biological role, member of the two-component regulatory system MprB/MprA which contributes to maintaining a balance among several systems involved in stress resistance and is required for establishment and maintenance of persistent infection in the host. In response to environmental signals MprB acts both as a membrane-associated protein kinase that undergoes autophosphorylation and subsequently transfers the phosphate to MprA, and a protein phosphatase that dephosphorylates phospho-MprA. In Mycobacterium tuberculosis (strain ATCC 25177 / H37Ra), this protein is Signal transduction histidine-protein kinase/phosphatase MprB (mprB).